A 179-amino-acid polypeptide reads, in one-letter code: Putative undecaprenyl-phosphate N-acetylgalactosaminyl 1-phosphate transferase (179 aa).

Residues 39-59 (IWFALIGLAIALPMIAVFSIL) traverse the membrane as a helical segment.

This sequence belongs to the bacterial sugar transferase family.

It localises to the cell membrane. It carries out the reaction di-trans,octa-cis-undecaprenyl phosphate + UDP-N-acetyl-alpha-D-galactosamine = N-acetyl-alpha-D-galactosaminyl-di-trans,octa-cis-undecaprenyl diphosphate + UMP. It functions in the pathway cell wall biogenesis; teichuronic acid biosynthesis. Functionally, might mediate the very first reaction in teichuronic synthesis, i.e. the formation of lipid-linked N-acetylglucosamine. The sequence is that of Putative undecaprenyl-phosphate N-acetylgalactosaminyl 1-phosphate transferase (tuaA) from Bacillus subtilis (strain 168).